Consider the following 213-residue polypeptide: uncharacterized protein (213 aa).

A helical transmembrane segment spans residues 22–42 (WFGLSMVSIAVIFGPLTGAHV). The short motif at 43–45 (NPA) is the NPA 1 element. The next 3 helical transmembrane spans lie at 63–83 (VYII…WLLF), 112–132 (NLLS…TLNH), and 138–158 (GVAM…FGGL). The NPA 2 signature appears at 164 to 166 (NPA). A helical membrane pass occupies residues 188 to 208 (FDYAWVPVLRPVIGAILAAWL).

The protein belongs to the MIP/aquaporin (TC 1.A.8) family.

It is found in the cell membrane. This is an uncharacterized protein from Haemophilus influenzae (strain ATCC 51907 / DSM 11121 / KW20 / Rd).